The chain runs to 712 residues: Glucans biosynthesis glucosyltransferase H (712 aa).

The next 6 membrane-spanning stretches (helical) occupy residues 57–77, 89–109, 408–428, 462–482, 552–572, and 573–593; these read LAIMLATAALTCAGGYEMYQV, IVLALFAALFAWVALSFVSAL, GIGSYITAPMWLAFLVAGILI, FAGTMGLLMMPKLLALILVVI, YAAPSWLGAVMAVSALLVSWP, and LLLWMMPVILGLVLAIPVALL.

Belongs to the glycosyltransferase 2 family. OpgH subfamily.

The protein localises to the cell inner membrane. It functions in the pathway glycan metabolism; osmoregulated periplasmic glucan (OPG) biosynthesis. Its function is as follows. Involved in the biosynthesis of osmoregulated periplasmic glucans (OPGs). In Rhodopseudomonas palustris (strain BisA53), this protein is Glucans biosynthesis glucosyltransferase H.